The sequence spans 341 residues: Putative methyltransferase YGR283C (341 aa).

It belongs to the class IV-like SAM-binding methyltransferase superfamily.

Its subcellular location is the nucleus. The protein localises to the nucleolus. This is Putative methyltransferase YGR283C from Saccharomyces cerevisiae (strain ATCC 204508 / S288c) (Baker's yeast).